Consider the following 388-residue polypeptide: Phosphopentomutase (388 aa).

Asp-10, Asp-282, His-287, Asp-323, His-324, and His-335 together coordinate Mn(2+).

It belongs to the phosphopentomutase family. Mn(2+) serves as cofactor.

Its subcellular location is the cytoplasm. The catalysed reaction is 2-deoxy-alpha-D-ribose 1-phosphate = 2-deoxy-D-ribose 5-phosphate. The enzyme catalyses alpha-D-ribose 1-phosphate = D-ribose 5-phosphate. It functions in the pathway carbohydrate degradation; 2-deoxy-D-ribose 1-phosphate degradation; D-glyceraldehyde 3-phosphate and acetaldehyde from 2-deoxy-alpha-D-ribose 1-phosphate: step 1/2. Its function is as follows. Isomerase that catalyzes the conversion of deoxy-ribose 1-phosphate (dRib-1-P) and ribose 1-phosphate (Rib-1-P) to deoxy-ribose 5-phosphate (dRib-5-P) and ribose 5-phosphate (Rib-5-P), respectively. This Carboxydothermus hydrogenoformans (strain ATCC BAA-161 / DSM 6008 / Z-2901) protein is Phosphopentomutase.